Here is a 369-residue protein sequence, read N- to C-terminus: Anhydro-N-acetylmuramic acid kinase (369 aa).

12–19 (GTSMDGVD) is an ATP binding site.

The protein belongs to the anhydro-N-acetylmuramic acid kinase family.

The catalysed reaction is 1,6-anhydro-N-acetyl-beta-muramate + ATP + H2O = N-acetyl-D-muramate 6-phosphate + ADP + H(+). The protein operates within amino-sugar metabolism; 1,6-anhydro-N-acetylmuramate degradation. Its pathway is cell wall biogenesis; peptidoglycan recycling. In terms of biological role, catalyzes the specific phosphorylation of 1,6-anhydro-N-acetylmuramic acid (anhMurNAc) with the simultaneous cleavage of the 1,6-anhydro ring, generating MurNAc-6-P. Is required for the utilization of anhMurNAc either imported from the medium or derived from its own cell wall murein, and thus plays a role in cell wall recycling. The protein is Anhydro-N-acetylmuramic acid kinase of Shewanella sp. (strain MR-4).